Here is a 655-residue protein sequence, read N- to C-terminus: p-hydroxybenzoic acid efflux pump subunit AaeB (655 aa).

A run of 11 helical transmembrane segments spans residues 13 to 33 (FAVK…HFQL), 38 to 58 (WAVL…GGEP), 69 to 89 (LRII…IAMI), 93 to 113 (LLMI…SSLV), 121 to 141 (WGLA…EPLL), 152 to 172 (EIVI…PRSI), 370 to 390 (LFWL…IAVV), 407 to 427 (FIYG…VIIP), 431 to 451 (QSML…GIEV), 459 to 479 (MGAL…TFHF), and 482 to 502 (FLDS…VILL).

It belongs to the aromatic acid exporter ArAE (TC 2.A.85) family.

It localises to the cell inner membrane. Functionally, forms an efflux pump with AaeA. Could function as a metabolic relief valve, allowing to eliminate certain compounds when they accumulate to high levels in the cell. In Escherichia coli O6:K15:H31 (strain 536 / UPEC), this protein is p-hydroxybenzoic acid efflux pump subunit AaeB.